A 458-amino-acid chain; its full sequence is Divalent metal cation transporter MntH (458 aa).

Helical transmembrane passes span 38–58 (GFWK…VGYM), 76–96 (SLLS…AMAA), 119–139 (GGFL…AEII), 151–171 (MPLI…LLLM), 180–200 (AVVA…VILA), 223–243 (MLYL…LFLG), 275–295 (LTMA…LFFG), 315–335 (IVGA…LLAS), 370–390 (LMSV…EAKI), 393–413 (LLTF…IPLV), and 437–457 (FISG…LGFV).

Belongs to the NRAMP family.

It is found in the cell membrane. H(+)-stimulated, divalent metal cation uptake system. This chain is Divalent metal cation transporter MntH, found in Lacticaseibacillus paracasei (strain ATCC 334 / BCRC 17002 / CCUG 31169 / CIP 107868 / KCTC 3260 / NRRL B-441) (Lactobacillus paracasei).